The chain runs to 153 residues: Ribosome maturation factor RimP (153 aa).

This sequence belongs to the RimP family.

The protein resides in the cytoplasm. Required for maturation of 30S ribosomal subunits. This is Ribosome maturation factor RimP from Clostridium botulinum (strain ATCC 19397 / Type A).